Here is a 249-residue protein sequence, read N- to C-terminus: DNA polymerase sliding clamp (249 aa).

The protein belongs to the PCNA family. As to quaternary structure, the subunits circularize to form a toroid; DNA passes through its center. Replication factor C (RFC) is required to load the toroid on the DNA. Homotrimer. Interacts with NucS.

In terms of biological role, sliding clamp subunit that acts as a moving platform for DNA processing. Responsible for tethering the catalytic subunit of DNA polymerase and other proteins to DNA during high-speed replication. Regulates activity of NucS endonuclease and prevents non-specific cleavage. The sequence is that of DNA polymerase sliding clamp from Pyrococcus abyssi (strain GE5 / Orsay).